A 413-amino-acid polypeptide reads, in one-letter code: Serine hydroxymethyltransferase (413 aa).

Residues leucine 117 and 121–123 (GHL) each bind (6S)-5,6,7,8-tetrahydrofolate. Lysine 226 bears the N6-(pyridoxal phosphate)lysine mark. (6S)-5,6,7,8-tetrahydrofolate-binding positions include glutamate 239 and 349-351 (SPF).

This sequence belongs to the SHMT family. In terms of assembly, homodimer. Pyridoxal 5'-phosphate serves as cofactor.

The protein localises to the cytoplasm. It catalyses the reaction (6R)-5,10-methylene-5,6,7,8-tetrahydrofolate + glycine + H2O = (6S)-5,6,7,8-tetrahydrofolate + L-serine. It participates in one-carbon metabolism; tetrahydrofolate interconversion. The protein operates within amino-acid biosynthesis; glycine biosynthesis; glycine from L-serine: step 1/1. Functionally, catalyzes the reversible interconversion of serine and glycine with tetrahydrofolate (THF) serving as the one-carbon carrier. This reaction serves as the major source of one-carbon groups required for the biosynthesis of purines, thymidylate, methionine, and other important biomolecules. Also exhibits THF-independent aldolase activity toward beta-hydroxyamino acids, producing glycine and aldehydes, via a retro-aldol mechanism. The sequence is that of Serine hydroxymethyltransferase from Bacillus anthracis (strain A0248).